We begin with the raw amino-acid sequence, 215 residues long: Endonuclease III (215 aa).

The 20-residue stretch at 113 to 132 folds into the HhH domain; it reads REDLESLPGVGRKTANVILN. [4Fe-4S] cluster-binding residues include cysteine 192, cysteine 199, cysteine 202, and cysteine 208.

It belongs to the Nth/MutY family. It depends on [4Fe-4S] cluster as a cofactor.

It carries out the reaction 2'-deoxyribonucleotide-(2'-deoxyribose 5'-phosphate)-2'-deoxyribonucleotide-DNA = a 3'-end 2'-deoxyribonucleotide-(2,3-dehydro-2,3-deoxyribose 5'-phosphate)-DNA + a 5'-end 5'-phospho-2'-deoxyribonucleoside-DNA + H(+). DNA repair enzyme that has both DNA N-glycosylase activity and AP-lyase activity. The DNA N-glycosylase activity releases various damaged pyrimidines from DNA by cleaving the N-glycosidic bond, leaving an AP (apurinic/apyrimidinic) site. The AP-lyase activity cleaves the phosphodiester bond 3' to the AP site by a beta-elimination, leaving a 3'-terminal unsaturated sugar and a product with a terminal 5'-phosphate. This Buchnera aphidicola subsp. Baizongia pistaciae (strain Bp) protein is Endonuclease III.